The chain runs to 717 residues: SAGA factor-like TAF6 (717 aa).

A sufficient for interaction with Taf9 region spans residues 123–204 (KSYAGFDPRS…VPPMLGAMDS (82 aa)).

It belongs to the TAF6 family. Component of the Spt-Ada-Gcn5 acetyltransferase (SAGA) complex consisting of wda/Taf5L, Saf6, Taf9, Taf10b, Taf12, Ada1, Spt3, Spt7, Spt20, Sf3b3, Sf3b5, Nipped-A/Tra1, a histone acetyltransferase (HAT) module made up of Gcn5, Ada2b (Isoform B), Ada3 and Sgf29, and a deubiquitinase (DUB) module made up of not/nonstop, Sgf11 and e(y)2 tethered to SAGA by Atxn7; not essential for SAGA complex assembly, histone-modifying activity or chromosomal recruitment. Interacts (via N-terminal histone-fold domain) with Taf9 (via N-terminal histone-fold domain); the interaction is probably direct. Probably forms a histone-like heterooctamer structure with Taf9, Taf12 and Taf10b.

It is found in the nucleus. It localises to the chromosome. Component of the transcription regulatory complex SAGA, a multiprotein complex that activates transcription by remodeling chromatin and mediating histone acetylation and deubiquitination. The SAGA complex predominantly acetylates histone H3. Involved in SAGA complex coactivator function but not essential for SAGA complex assembly, histone-modifying activity or chromosomal recruitment. Required for oogenesis; involved in transcriptional activation. This is SAGA factor-like TAF6 from Drosophila melanogaster (Fruit fly).